A 281-amino-acid chain; its full sequence is Diaminopimelate epimerase (281 aa).

Substrate is bound by residues Asn13 and Asn66. Cys75 serves as the catalytic Proton donor. Residues 76–77 (GN), Asn164, Asn197, and 215–216 (ER) each bind substrate. The active-site Proton acceptor is the Cys224. Residue 225–226 (GT) participates in substrate binding.

Belongs to the diaminopimelate epimerase family. Homodimer.

It localises to the cytoplasm. It catalyses the reaction (2S,6S)-2,6-diaminopimelate = meso-2,6-diaminopimelate. It participates in amino-acid biosynthesis; L-lysine biosynthesis via DAP pathway; DL-2,6-diaminopimelate from LL-2,6-diaminopimelate: step 1/1. Its function is as follows. Catalyzes the stereoinversion of LL-2,6-diaminopimelate (L,L-DAP) to meso-diaminopimelate (meso-DAP), a precursor of L-lysine and an essential component of the bacterial peptidoglycan. The sequence is that of Diaminopimelate epimerase from Rippkaea orientalis (strain PCC 8801 / RF-1) (Cyanothece sp. (strain PCC 8801)).